The following is a 396-amino-acid chain: Deoxyguanosinetriphosphate triphosphohydrolase-like protein (396 aa).

Positions arginine 62–asparagine 198 constitute an HD domain.

This sequence belongs to the dGTPase family. Type 2 subfamily.

This Jannaschia sp. (strain CCS1) protein is Deoxyguanosinetriphosphate triphosphohydrolase-like protein.